The following is a 273-amino-acid chain: Ribosomal RNA small subunit methyltransferase A (273 aa).

S-adenosyl-L-methionine-binding residues include Asn-18, Leu-20, Gly-45, Glu-66, Asp-91, and Asn-113.

This sequence belongs to the class I-like SAM-binding methyltransferase superfamily. rRNA adenine N(6)-methyltransferase family. RsmA subfamily.

It localises to the cytoplasm. It carries out the reaction adenosine(1518)/adenosine(1519) in 16S rRNA + 4 S-adenosyl-L-methionine = N(6)-dimethyladenosine(1518)/N(6)-dimethyladenosine(1519) in 16S rRNA + 4 S-adenosyl-L-homocysteine + 4 H(+). Its function is as follows. Specifically dimethylates two adjacent adenosines (A1518 and A1519) in the loop of a conserved hairpin near the 3'-end of 16S rRNA in the 30S particle. May play a critical role in biogenesis of 30S subunits. The polypeptide is Ribosomal RNA small subunit methyltransferase A (Salmonella typhimurium (strain LT2 / SGSC1412 / ATCC 700720)).